Reading from the N-terminus, the 189-residue chain is Parkinson disease protein 7 homolog (189 aa).

A2 is modified (N-acetylalanine; in Protein/nucleic acid deglycase DJ-1, N-terminally processed). Residues C46 and C53 are each lipidated (S-palmitoyl cysteine). Y67 carries the phosphotyrosine modification. Catalysis depends on C106, which acts as the Nucleophile. Position 106 is a cysteine sulfinic acid (-SO2H); alternate (C106). Residue C106 is the site of S-palmitoyl cysteine; alternate attachment. H126 is a catalytic residue. Residue K130 forms a Glycyl lysine isopeptide (Lys-Gly) (interchain with G-Cter in SUMO) linkage. K148 carries the N6-acetyllysine modification. At K182 the chain carries N6-succinyllysine.

This sequence belongs to the peptidase C56 family. As to quaternary structure, homodimer. Binds EFCAB6/DJBP and PIAS2. Part of a ternary complex containing PARK7, EFCAB6/DJBP and AR. Interacts (via N-terminus) with OTUD7B. Interacts with BBS1, HIPK1, CLCF1 and MTERF. Forms a complex with PINK1 and PRKN. Interacts (via C-terminus) with NCF1; the interaction is enhanced by LPS and modulates NCF1 phosphorylation and membrane translocation. Interacts with NENF. Requires Deglycase activity does not require glutathione as a cofactor, however, glycated glutathione constitutes a PARK7 substrate. as cofactor. In terms of processing, sumoylated on Lys-130 by PIAS2 or PIAS4; which is essential for cell-growth promoting activity and transforming activity. Post-translationally, undergoes cleavage of a C-terminal peptide and subsequent activation of protease activity in response to oxidative stress. In terms of tissue distribution, detected in liver, heart, spleen and testis (at protein level). Detected in liver, heart, spleen, kidney, epididymidis, vas deferens, sperm cells and testis.

Its subcellular location is the cell membrane. The protein resides in the cytoplasm. It localises to the nucleus. The protein localises to the membrane raft. It is found in the mitochondrion. Its subcellular location is the endoplasmic reticulum. It carries out the reaction N(omega)-(1-hydroxy-2-oxopropyl)-L-arginyl-[protein] + H2O = lactate + L-arginyl-[protein] + H(+). It catalyses the reaction N(6)-(1-hydroxy-2-oxopropyl)-L-lysyl-[protein] + H2O = lactate + L-lysyl-[protein] + H(+). The enzyme catalyses S-(1-hydroxy-2-oxopropyl)-L-cysteinyl-[protein] + H2O = lactate + L-cysteinyl-[protein] + H(+). The catalysed reaction is N(omega)-(1-hydroxy-2-oxoethyl)-L-arginyl-[protein] + H2O = L-arginyl-[protein] + glycolate + H(+). It carries out the reaction N(6)-(1-hydroxy-2-oxoethyl)-L-lysyl-[protein] + H2O = glycolate + L-lysyl-[protein] + H(+). It catalyses the reaction S-(1-hydroxy-2-oxoethyl)-L-cysteinyl-[protein] + H2O = glycolate + L-cysteinyl-[protein] + H(+). The enzyme catalyses N(2)-(1-hydroxy-2-oxopropyl)-dGTP + H2O = lactate + dGTP + H(+). The catalysed reaction is N(2)-(1-hydroxy-2-oxopropyl)-GTP + H2O = lactate + GTP + H(+). It carries out the reaction N(2)-(1-hydroxy-2-oxopropyl)-GDP + H2O = lactate + GDP + H(+). It catalyses the reaction N(2)-(1-hydroxy-2-oxopropyl)-GMP + H2O = lactate + GMP + H(+). The enzyme catalyses N(2)-(1-hydroxy-2-oxoethyl)-dGTP + H2O = dGTP + glycolate + H(+). The catalysed reaction is N(2)-(1-hydroxy-2-oxoethyl)-GTP + H2O = glycolate + GTP + H(+). It carries out the reaction N(2)-(1-hydroxy-2-oxoethyl)-GDP + H2O = glycolate + GDP + H(+). It catalyses the reaction N(2)-(1-hydroxy-2-oxoethyl)-GMP + H2O = glycolate + GMP + H(+). The enzyme catalyses an N(2)-(1-hydroxy-2-oxopropyl)-guanosine in RNA + H2O = a guanosine in RNA + lactate + H(+). The catalysed reaction is an N(2)-(1-hydroxy-2-oxopropyl)-2'-deoxyguanosine in DNA + H2O = a 2'-deoxyguanosine in DNA + lactate + H(+). It carries out the reaction an N(2)-(1-hydroxy-2-oxoethyl)-guanosine in RNA + H2O = a guanosine in RNA + glycolate + H(+). It catalyses the reaction an N(2)-(1-hydroxy-2-oxoethyl)-2'-deoxyguanosine in DNA + H2O = a 2'-deoxyguanosine in DNA + glycolate + H(+). In terms of biological role, multifunctional protein with controversial molecular function which plays an important role in cell protection against oxidative stress and cell death acting as oxidative stress sensor and redox-sensitive chaperone and protease. It is involved in neuroprotective mechanisms like the stabilization of NFE2L2 and PINK1 proteins, male fertility as a positive regulator of androgen signaling pathway as well as cell growth and transformation through, for instance, the modulation of NF-kappa-B signaling pathway. Has been described as a protein and nucleotide deglycase that catalyzes the deglycation of the Maillard adducts formed between amino groups of proteins or nucleotides and reactive carbonyl groups of glyoxals. But this function is rebuted by other works. As a protein deglycase, repairs methylglyoxal- and glyoxal-glycated proteins, and releases repaired proteins and lactate or glycolate, respectively. Deglycates cysteine, arginine and lysine residues in proteins, and thus reactivates these proteins by reversing glycation by glyoxals. Acts on early glycation intermediates (hemithioacetals and aminocarbinols), preventing the formation of advanced glycation endproducts (AGE) that cause irreversible damage. Also functions as a nucleotide deglycase able to repair glycated guanine in the free nucleotide pool (GTP, GDP, GMP, dGTP) and in DNA and RNA. Is thus involved in a major nucleotide repair system named guanine glycation repair (GG repair), dedicated to reversing methylglyoxal and glyoxal damage via nucleotide sanitization and direct nucleic acid repair. Protects histones from adduction by methylglyoxal, controls the levels of methylglyoxal-derived argininine modifications on chromatin. Able to remove the glycations and restore histone 3, histone glycation disrupts both local and global chromatin architecture by altering histone-DNA interactions as well as histone acetylation and ubiquitination levels. Displays a very low glyoxalase activity that may reflect its deglycase activity. Eliminates hydrogen peroxide and protects cells against hydrogen peroxide-induced cell death. Required for correct mitochondrial morphology and function as well as for autophagy of dysfunctional mitochondria. Plays a role in regulating expression or stability of the mitochondrial uncoupling proteins SLC25A14 and SLC25A27 in dopaminergic neurons of the substantia nigra pars compacta and attenuates the oxidative stress induced by calcium entry into the neurons via L-type channels during pacemaking. Regulates astrocyte inflammatory responses, may modulate lipid rafts-dependent endocytosis in astrocytes and neuronal cells. In pancreatic islets, involved in the maintenance of mitochondrial reactive oxygen species (ROS) levels and glucose homeostasis in an age- and diet dependent manner. Protects pancreatic beta cells from cell death induced by inflammatory and cytotoxic setting. Binds to a number of mRNAs containing multiple copies of GG or CC motifs and partially inhibits their translation but dissociates following oxidative stress. Metal-binding protein able to bind copper as well as toxic mercury ions, enhances the cell protection mechanism against induced metal toxicity. In macrophages, interacts with the NADPH oxidase subunit NCF1 to direct NADPH oxidase-dependent ROS production, and protects against sepsis. The protein is Parkinson disease protein 7 homolog (PARK7) of Mesocricetus auratus (Golden hamster).